Consider the following 507-residue polypeptide: MKCMSIKAEEISALIKKQIENYQSEIEVSDVGTVIQVGDGIARAHGLDNVMSGELVEFANGVMGLALNLEENNVGIVILGPYTGIKEGDEVRRTGRIMEVPVGEALIGRVVNPLGQPVDGLGPIETTETRPIESPAPGVMDRKSVHEPLQTGIKAIDALVPIGRGQRELIIGDRQTGKTSVAVDTIINQKGKNMICIYVAIGQKESTVRNVVETLRKYGALDYTIVVTASASQPAPLLFLAPYAGVTMGEYFMYKGQHVLVVYDDLSKQAAAYRELSLLLRRPPGREAYPGDVFYLHSRLLERAAKLSDAKGAGSLTALPFVETQAGDISAYIPTNVISITDGQIFLQSDLFFSGVRPAINAGLSVSRVGGAAQIKAMKKVSGTLRLDLAAYRELEAFAQFGSDLDKATQAKLARGARTVEVLKQGLHEPLPVEKQVAIIYALTRGFLDDIPVEDIRRFEKEFHAWLDKDENGQKLMEHIRTTGDLPNEEDFNKAIEAFKKTFVVSE.

A disordered region spans residues 118-141; sequence VDGLGPIETTETRPIESPAPGVMD. 172–179 contacts ATP; it reads GDRQTGKT.

This sequence belongs to the ATPase alpha/beta chains family. F-type ATPases have 2 components, CF(1) - the catalytic core - and CF(0) - the membrane proton channel. CF(1) has five subunits: alpha(3), beta(3), gamma(1), delta(1), epsilon(1). CF(0) has three main subunits: a(1), b(2) and c(9-12). The alpha and beta chains form an alternating ring which encloses part of the gamma chain. CF(1) is attached to CF(0) by a central stalk formed by the gamma and epsilon chains, while a peripheral stalk is formed by the delta and b chains.

Its subcellular location is the cell membrane. It carries out the reaction ATP + H2O + 4 H(+)(in) = ADP + phosphate + 5 H(+)(out). Functionally, produces ATP from ADP in the presence of a proton gradient across the membrane. The alpha chain is a regulatory subunit. This chain is ATP synthase subunit alpha, found in Anoxybacillus flavithermus (strain DSM 21510 / WK1).